A 586-amino-acid polypeptide reads, in one-letter code: Alanine racemase ungC (586 aa).

The disordered stretch occupies residues 187–206 (RVGALPAAASTASPMGSSLP). Residues 196–206 (STASPMGSSLP) are compositionally biased toward polar residues.

This sequence belongs to the trans-sulfuration enzymes family. Pyridoxal 5'-phosphate is required as a cofactor.

It carries out the reaction L-alanine = D-alanine. It participates in secondary metabolite biosynthesis. Functionally, alanine racemase; part of the gene cluster that mediates the biosynthesis of the unguisins, gamma-aminobutyric acid (GABA)-containing fungal cyclic heptapeptides with the amino acid sequence cyclo-(D-Ala1-D-Val2-L-Phe3-D-Val4-D-Ala5-D-Trp6-GABA7) for unguisin A and cyclo-(D-Ala1-D-Val2-L-Leu3-D-Val4-D-Ala5-D-Trp6-GABA7) for unguisin B. Within the pathway, the alanine racemase ungC catalyzes the interconversion of L-alanine and D-alanine, providing the D-alanine which is accepted by the first adenylation domain of the nonribosomal peptide synthetase (NRPS) ungA. UngA is the main enzyme within the cluster which condenses the 7 residues using its respective 7 modules. The terminal condensation domain (Ct) is involved in cyclization with D-alanine and thereby releasing of unguisins A and B. Finally, the hydrolase ungD catalyzes the hydrolysis between the D-tryptophan and GABA residues of unguisins A and B to produce the corresponding linear peptides. The polypeptide is Alanine racemase ungC (Aspergillus violaceofuscus (strain CBS 115571)).